Here is a 352-residue protein sequence, read N- to C-terminus: 4-hydroxy-3-methylbut-2-en-1-yl diphosphate synthase (flavodoxin) (352 aa).

[4Fe-4S] cluster contacts are provided by Cys262, Cys265, Cys297, and Glu304.

It belongs to the IspG family. [4Fe-4S] cluster serves as cofactor.

The enzyme catalyses (2E)-4-hydroxy-3-methylbut-2-enyl diphosphate + oxidized [flavodoxin] + H2O + 2 H(+) = 2-C-methyl-D-erythritol 2,4-cyclic diphosphate + reduced [flavodoxin]. Its pathway is isoprenoid biosynthesis; isopentenyl diphosphate biosynthesis via DXP pathway; isopentenyl diphosphate from 1-deoxy-D-xylulose 5-phosphate: step 5/6. In terms of biological role, converts 2C-methyl-D-erythritol 2,4-cyclodiphosphate (ME-2,4cPP) into 1-hydroxy-2-methyl-2-(E)-butenyl 4-diphosphate. In Nitratiruptor sp. (strain SB155-2), this protein is 4-hydroxy-3-methylbut-2-en-1-yl diphosphate synthase (flavodoxin).